A 303-amino-acid polypeptide reads, in one-letter code: Protoheme IX farnesyltransferase (303 aa).

9 helical membrane passes run 26-46 (VVAL…PGMV), 48-68 (IDIL…AAAV), 98-118 (AILF…VWVN), 120-140 (LTAW…TFWL), 148-168 (IVIG…AVTG), 174-194 (ALLL…ALAV), 221-241 (ILLY…THML), 244-264 (LYLL…VAMM), and 278-298 (YSIV…YLLP).

It belongs to the UbiA prenyltransferase family. Protoheme IX farnesyltransferase subfamily.

Its subcellular location is the cell inner membrane. It carries out the reaction heme b + (2E,6E)-farnesyl diphosphate + H2O = Fe(II)-heme o + diphosphate. The protein operates within porphyrin-containing compound metabolism; heme O biosynthesis; heme O from protoheme: step 1/1. Functionally, converts heme B (protoheme IX) to heme O by substitution of the vinyl group on carbon 2 of heme B porphyrin ring with a hydroxyethyl farnesyl side group. This Saccharophagus degradans (strain 2-40 / ATCC 43961 / DSM 17024) protein is Protoheme IX farnesyltransferase.